The sequence spans 298 residues: Elongation factor Ts (298 aa).

Residues 79-82 form an involved in Mg(2+) ion dislocation from EF-Tu region; it reads TDFV.

It belongs to the EF-Ts family.

Its subcellular location is the cytoplasm. Associates with the EF-Tu.GDP complex and induces the exchange of GDP to GTP. It remains bound to the aminoacyl-tRNA.EF-Tu.GTP complex up to the GTP hydrolysis stage on the ribosome. The sequence is that of Elongation factor Ts from Cereibacter sphaeroides (strain ATCC 17025 / ATH 2.4.3) (Rhodobacter sphaeroides).